A 546-amino-acid polypeptide reads, in one-letter code: Chaperonin GroEL (546 aa).

ATP is bound by residues 30-33 (TLGP), Lys-51, 87-91 (DGTTT), Gly-415, 479-481 (NAA), and Asp-495.

This sequence belongs to the chaperonin (HSP60) family. Forms a cylinder of 14 subunits composed of two heptameric rings stacked back-to-back. Interacts with the co-chaperonin GroES.

It is found in the cytoplasm. The catalysed reaction is ATP + H2O + a folded polypeptide = ADP + phosphate + an unfolded polypeptide.. In terms of biological role, together with its co-chaperonin GroES, plays an essential role in assisting protein folding. The GroEL-GroES system forms a nano-cage that allows encapsulation of the non-native substrate proteins and provides a physical environment optimized to promote and accelerate protein folding. In Pseudomonas putida (strain ATCC 700007 / DSM 6899 / JCM 31910 / BCRC 17059 / LMG 24140 / F1), this protein is Chaperonin GroEL.